Here is a 99-residue protein sequence, read N- to C-terminus: PE-PGRS family protein PE25 (99 aa).

The PE domain occupies 1–92; that stretch reads MSFVITNPEA…GADKYATAEA (92 aa). Position 2 is an N-acetylserine (Ser-2).

This sequence belongs to the mycobacterial PE family. Forms a heterodimer with PPE41. The dimer forms a 1:1:1 heterotrimeric complex with EspG5. Interacts with PPE51.

The protein resides in the secreted. Its function is as follows. The PE25/PPE41 dimer induces both a strong humoral and cellular immune response. PE25 protein alone induces low response. The dimer induces necrosis, but not apoptosis, in mouse macrophage cells. It also induces activation and maturation of mouse dendritic cells and drives Th2-biased immune responses. This chain is PE-PGRS family protein PE25, found in Mycobacterium tuberculosis (strain ATCC 25618 / H37Rv).